The sequence spans 698 residues: Serine/alanine racemase (698 aa).

Over 1–10 the chain is Cytoplasmic; it reads MKNKGIDQFR. A helical transmembrane segment spans residues 11-31; that stretch reads VIAAMMVVAIHCLPLHYLWPE. The Extracellular segment spans residues 32 to 42; the sequence is GDILITLTIFR. Residues 43–63 traverse the membrane as a helical segment; that stretch reads VAVPFFFMISGYYVFAELAVA. The Cytoplasmic segment spans residues 64–81; the sequence is NSYPSRQRVFNFIKKQLK. A helical transmembrane segment spans residues 82-102; that stretch reads VYLLATLMFLPLALYSQTIGF. The Extracellular segment spans residues 103-121; it reads DLPVGTLVQVLLVNGILYH. The chain crosses the membrane as a helical span at residues 122 to 142; that stretch reads LWYFPALITGSLLLTSLLIHV. Residues 143–147 are Cytoplasmic-facing; sequence SFKKV. Residues 148 to 168 form a helical membrane-spanning segment; that stretch reads FWLAAGLYLIGLGGDSWFGLI. Over 169 to 183 the chain is Extracellular; the sequence is QQTPIEPFYTAVFHL. Residues 184–204 form a helical membrane-spanning segment; that stretch reads LDGTRNGIFFTPLFLCLGVLV. Over 205–216 the chain is Cytoplasmic; the sequence is RKQSEKRSLSKT. Residues 217–237 form a helical membrane-spanning segment; the sequence is ALFFLISLIGLLIESAYLHGF. Over 238–244 the chain is Extracellular; it reads SIPKHDS. The chain crosses the membrane as a helical span at residues 245 to 265; that stretch reads MYLFLPVVLFFLFPLILRWHP. At 266–274 the chain is on the cytoplasmic side; sequence HRTWKHPGQ. Residues 275–295 traverse the membrane as a helical segment; the sequence is LSLWLYLLHPYTIAGTHFLSQ. Residues 296-301 are Extracellular-facing; that stretch reads KISILQ. Residues 302–322 traverse the membrane as a helical segment; that stretch reads NNLINYLVVLILTIGFICLFL. At 323–698 the chain is on the cytoplasmic side; that stretch reads RQKHSWFRHK…IGPRVSARIK (376 aa). Positions 332 to 698 are racemase; the sequence is KQTTPVKRAV…IGPRVSARIK (367 aa). Lysine 371 (proton acceptor) is an active-site residue. Lysine 371 is modified (N6-(pyridoxal phosphate)lysine). Residue arginine 465 participates in substrate binding. Tyrosine 597 acts as the Proton acceptor in catalysis. Methionine 646 is a substrate binding site.

This sequence in the N-terminal section; belongs to the acyltransferase 3 family. The protein in the C-terminal section; belongs to the alanine racemase family. Homodimer. Pyridoxal 5'-phosphate is required as a cofactor.

The protein localises to the cell membrane. It carries out the reaction L-alanine = D-alanine. The catalysed reaction is L-serine = D-serine. The protein operates within amino-acid biosynthesis; D-alanine biosynthesis; D-alanine from L-alanine: step 1/1. Its function is as follows. Catalyzes the interconversion of L-serine and D-serine, and L-alanine and D-alanine. L-alanine is racemized at a rate that is 14% of that of L-serine. Together with VanC/VanC1 and VanXYC, required for vancomycin resistance in E.gallinarum strain BM4174. This chain is Serine/alanine racemase, found in Enterococcus gallinarum.